The chain runs to 341 residues: UDP-N-acetylenolpyruvoylglucosamine reductase (341 aa).

The FAD-binding PCMH-type domain occupies 15–185 (LAQSCADLVE…TAVGLRLVKR (171 aa)). Arginine 161 is a catalytic residue. Serine 231 acts as the Proton donor in catalysis. The active site involves glutamate 327.

It belongs to the MurB family. FAD is required as a cofactor.

It localises to the cytoplasm. It carries out the reaction UDP-N-acetyl-alpha-D-muramate + NADP(+) = UDP-N-acetyl-3-O-(1-carboxyvinyl)-alpha-D-glucosamine + NADPH + H(+). The protein operates within cell wall biogenesis; peptidoglycan biosynthesis. Cell wall formation. This is UDP-N-acetylenolpyruvoylglucosamine reductase from Shewanella baltica (strain OS195).